Reading from the N-terminus, the 250-residue chain is N-acyl homoserine lactonase (250 aa).

7 residues coordinate Zn(2+): histidine 104, histidine 106, aspartate 108, histidine 109, histidine 169, aspartate 191, and histidine 235.

Belongs to the metallo-beta-lactamase superfamily. In terms of assembly, monomer. Zn(2+) is required as a cofactor.

The catalysed reaction is an N-acyl-L-homoserine lactone + H2O = an N-acyl-L-homoserine + H(+). The sequence is that of N-acyl homoserine lactonase from Bacillus cereus.